The following is a 339-amino-acid chain: Ketol-acid reductoisomerase (NADP(+)) (339 aa).

Positions 1 to 182 (MRVYYDRDAD…GGGRAGIIET (182 aa)) constitute a KARI N-terminal Rossmann domain. NADP(+) contacts are provided by residues 24 to 27 (YGSQ), arginine 48, serine 51, serine 53, and 83 to 86 (DELQ). Histidine 108 is an active-site residue. Residue glycine 134 participates in NADP(+) binding. One can recognise a KARI C-terminal knotted domain in the interval 183–328 (TFKEECETDL…ERLRGMMPWI (146 aa)). Positions 191, 195, 227, and 231 each coordinate Mg(2+). Residue serine 252 coordinates substrate.

This sequence belongs to the ketol-acid reductoisomerase family. Mg(2+) serves as cofactor.

It catalyses the reaction (2R)-2,3-dihydroxy-3-methylbutanoate + NADP(+) = (2S)-2-acetolactate + NADPH + H(+). The enzyme catalyses (2R,3R)-2,3-dihydroxy-3-methylpentanoate + NADP(+) = (S)-2-ethyl-2-hydroxy-3-oxobutanoate + NADPH + H(+). Its pathway is amino-acid biosynthesis; L-isoleucine biosynthesis; L-isoleucine from 2-oxobutanoate: step 2/4. It functions in the pathway amino-acid biosynthesis; L-valine biosynthesis; L-valine from pyruvate: step 2/4. Involved in the biosynthesis of branched-chain amino acids (BCAA). Catalyzes an alkyl-migration followed by a ketol-acid reduction of (S)-2-acetolactate (S2AL) to yield (R)-2,3-dihydroxy-isovalerate. In the isomerase reaction, S2AL is rearranged via a Mg-dependent methyl migration to produce 3-hydroxy-3-methyl-2-ketobutyrate (HMKB). In the reductase reaction, this 2-ketoacid undergoes a metal-dependent reduction by NADPH to yield (R)-2,3-dihydroxy-isovalerate. The sequence is that of Ketol-acid reductoisomerase (NADP(+)) from Methylobacterium sp. (strain 4-46).